Reading from the N-terminus, the 283-residue chain is ATP phosphoribosyltransferase (283 aa).

The protein belongs to the ATP phosphoribosyltransferase family. Long subfamily. Equilibrium between an active dimeric form, an inactive hexameric form and higher aggregates. Interconversion between the various forms is largely reversible and is influenced by the natural substrates and inhibitors of the enzyme. Mg(2+) serves as cofactor.

The protein resides in the cytoplasm. It catalyses the reaction 1-(5-phospho-beta-D-ribosyl)-ATP + diphosphate = 5-phospho-alpha-D-ribose 1-diphosphate + ATP. It functions in the pathway amino-acid biosynthesis; L-histidine biosynthesis; L-histidine from 5-phospho-alpha-D-ribose 1-diphosphate: step 1/9. Feedback inhibited by histidine. In terms of biological role, catalyzes the condensation of ATP and 5-phosphoribose 1-diphosphate to form N'-(5'-phosphoribosyl)-ATP (PR-ATP). Has a crucial role in the pathway because the rate of histidine biosynthesis seems to be controlled primarily by regulation of HisG enzymatic activity. The sequence is that of ATP phosphoribosyltransferase from Mycobacterium sp. (strain JLS).